The primary structure comprises 84 residues: MGIIAWIIFGLIAGIIAKLIMPGRDGGGFFLTCILGIVGAVVGGWLATMFGIGGSISGFNLHSFLVAVVGAILVLGVFRLLQRE.

The next 3 membrane-spanning stretches (helical) occupy residues 1–21 (MGII…KLIM), 27–47 (GGFF…GWLA), and 58–78 (GFNL…LGVF).

It belongs to the UPF0410 family.

It localises to the cell inner membrane. The chain is UPF0410 protein YmgE (ymgE) from Escherichia coli O127:H6 (strain E2348/69 / EPEC).